The following is a 312-amino-acid chain: Ribosomal protein L11 methyltransferase (312 aa).

Residues Thr-162, Gly-183, Asp-205, and Asn-248 each coordinate S-adenosyl-L-methionine.

It belongs to the methyltransferase superfamily. PrmA family.

Its subcellular location is the cytoplasm. It carries out the reaction L-lysyl-[protein] + 3 S-adenosyl-L-methionine = N(6),N(6),N(6)-trimethyl-L-lysyl-[protein] + 3 S-adenosyl-L-homocysteine + 3 H(+). Methylates ribosomal protein L11. The polypeptide is Ribosomal protein L11 methyltransferase (Bacillus anthracis (strain A0248)).